Here is a 321-residue protein sequence, read N- to C-terminus: Thioredoxin reductase (321 aa).

FAD contacts are provided by residues 11 to 14, 40 to 41, Gln-45, Asn-54, Cys-145, Asp-288, and 295 to 297; these read SGPA, TA, and RQA. Cys-142 and Cys-145 are joined by a disulfide.

Belongs to the class-II pyridine nucleotide-disulfide oxidoreductase family. Homodimer. The cofactor is FAD.

The protein localises to the cytoplasm. It carries out the reaction [thioredoxin]-dithiol + NADP(+) = [thioredoxin]-disulfide + NADPH + H(+). The polypeptide is Thioredoxin reductase (TRR1) (Debaryomyces hansenii (strain ATCC 36239 / CBS 767 / BCRC 21394 / JCM 1990 / NBRC 0083 / IGC 2968) (Yeast)).